The sequence spans 231 residues: D-allulose-6-phosphate 3-epimerase (231 aa).

Ser6 is a substrate binding site. His30, Asp32, and His63 together coordinate a divalent metal cation. Asp32 serves as the catalytic Proton acceptor. Residues His63, Gly140–Gly143, Asp173–Ser175, and Gly195–Ser197 contribute to the substrate site. An a divalent metal cation-binding site is contributed by Asp173. The active-site Proton donor is the Asp173.

Belongs to the ribulose-phosphate 3-epimerase family. AlsE subfamily. Homohexamer. Trimer of dimers. Co(2+) serves as cofactor. The cofactor is Mn(2+). Requires Zn(2+) as cofactor.

The enzyme catalyses D-allulose 6-phosphate = keto-D-fructose 6-phosphate. It participates in carbohydrate degradation; D-allose degradation. Its function is as follows. Catalyzes the reversible epimerization of D-allulose 6-phosphate to D-fructose 6-phosphate. Can also catalyze with lower efficiency the reversible epimerization of D-ribulose 5-phosphate to D-xylulose 5-phosphate. The protein is D-allulose-6-phosphate 3-epimerase of Escherichia coli (strain K12).